The following is a 697-amino-acid chain: Potassium-transporting ATPase ATP-binding subunit (697 aa).

Transmembrane regions (helical) follow at residues 55 to 75, 82 to 102, 245 to 265, and 271 to 291; these read PIMF…FLPS, GWFN…ANFA, LTLI…YLGF, and VLVA…LSAI. The active-site 4-aspartylphosphate intermediate is Asp-324. ATP-binding positions include Asp-361, Glu-365, 393–400, and Lys-412; that span reads FKAETRMS. Mg(2+) is bound by residues Asp-535 and Asp-539. Transmembrane regions (helical) follow at residues 605–625, 633–653, and 677–697; these read FAII…LNIM, AILS…PLAM, and GGVI…GLFI.

This sequence belongs to the cation transport ATPase (P-type) (TC 3.A.3) family. Type IA subfamily. As to quaternary structure, the system is composed of three essential subunits: KdpA, KdpB and KdpC.

The protein resides in the cell membrane. The enzyme catalyses K(+)(out) + ATP + H2O = K(+)(in) + ADP + phosphate + H(+). Part of the high-affinity ATP-driven potassium transport (or Kdp) system, which catalyzes the hydrolysis of ATP coupled with the electrogenic transport of potassium into the cytoplasm. This subunit is responsible for energy coupling to the transport system and for the release of the potassium ions to the cytoplasm. The polypeptide is Potassium-transporting ATPase ATP-binding subunit (Bacillus mycoides (strain KBAB4) (Bacillus weihenstephanensis)).